The sequence spans 448 residues: Tubulin alpha-2 chain (448 aa).

8 residues coordinate GTP: Q11, E69, S138, G142, T143, T177, N204, and N226. E69 contributes to the Mg(2+) binding site. Residue E252 is part of the active site. The tract at residues 428–448 is disordered; sequence KDYEEVGADSNEGGEEEGEEY. A compositionally biased stretch (acidic residues) spans 429–448; it reads DYEEVGADSNEGGEEEGEEY.

It belongs to the tubulin family. Dimer of alpha and beta chains. A typical microtubule is a hollow water-filled tube with an outer diameter of 25 nm and an inner diameter of 15 nM. Alpha-beta heterodimers associate head-to-tail to form protofilaments running lengthwise along the microtubule wall with the beta-tubulin subunit facing the microtubule plus end conferring a structural polarity. Microtubules usually have 13 protofilaments but different protofilament numbers can be found in some organisms and specialized cells. It depends on Mg(2+) as a cofactor. Undergoes a tyrosination/detyrosination cycle, the cyclic removal and re-addition of a C-terminal tyrosine residue. In terms of tissue distribution, expressed in intestine, pharyngeal muscle cells, and a subset of neurons.

It localises to the cytoplasm. The protein resides in the cytoskeleton. The enzyme catalyses GTP + H2O = GDP + phosphate + H(+). Its function is as follows. Tubulin is the major constituent of microtubules, a cylinder consisting of laterally associated linear protofilaments composed of alpha- and beta-tubulin heterodimers. Microtubules grow by the addition of GTP-tubulin dimers to the microtubule end, where a stabilizing cap forms. Below the cap, tubulin dimers are in GDP-bound state, owing to GTPase activity of alpha-tubulin. Required for the normal dynamic behavior of the non-centrosomal microtubules in the epidermal syncytium. Involved in the redistribution of microtubule end-binding protein EB1/ebp-2 caused by wounding. Required to modulate expression in the epidermis of antimicrobial peptides, such as nlp-29, after wounding, or fungal infection. The protein is Tubulin alpha-2 chain (tba-2) of Caenorhabditis elegans.